Consider the following 184-residue polypeptide: Probable RNA 2'-phosphotransferase (184 aa).

This sequence belongs to the KptA/TPT1 family.

Its function is as follows. Removes the 2'-phosphate from RNA via an intermediate in which the phosphate is ADP-ribosylated by NAD followed by a presumed transesterification to release the RNA and generate ADP-ribose 1''-2''-cyclic phosphate (APPR&gt;P). May function as an ADP-ribosylase. This is Probable RNA 2'-phosphotransferase from Escherichia coli O139:H28 (strain E24377A / ETEC).